The sequence spans 122 residues: MIQPQSYLNVADNSGARKLMCIRVLGTSDREYADTGDVIVAVVKEAVPNMPLKKSEVVRAVVVRTCKELKRDNGMRIRFDDNAAVVINQEGNPRGTRVFGPIARELREYNFTKIISLAPEVL.

The protein belongs to the universal ribosomal protein uL14 family. As to quaternary structure, part of the 50S ribosomal subunit.

Its subcellular location is the plastid. It localises to the chloroplast. Functionally, binds to 23S rRNA. The polypeptide is Large ribosomal subunit protein uL14c (Angiopteris evecta (Mule's foot fern)).